The chain runs to 100 residues: Putative insulin-like peptide beta-type 6 (100 aa).

The N-terminal stretch at 1–18 (MHSIVALMLIGTILPIAA) is a signal peptide. 4 cysteine pairs are disulfide-bonded: Cys-54/Cys-83, Cys-66/Cys-96, Cys-70/Cys-97, and Cys-82/Cys-87.

This sequence belongs to the insulin family.

It is found in the secreted. This is Putative insulin-like peptide beta-type 6 (ins-5) from Caenorhabditis elegans.